A 2210-amino-acid chain; its full sequence is MDEIISELRELCLNYIEQDERLSRQKLNFLGQREPRMVLIEGLKLLSRCIEIDSADKSGCTHNHDDKSVETILVESGIVCPGLPLIIPDGYKLIDNSLILLECFVRSSPASFEKKFIEDTNKLACIREDLAVAGVTLVPIVDGRCDYDNSFMPEWANFKFRDLLFKLLEYSNQNEKVFEESEYFRLCESLKTTIDKRSGMDSMKILKDARSTHNDEIMRMCHEGINPNMSCDDVVFGINSLFSRFRRDLESGKLKRNFQKVNPEGLIKEFSELYENLADSDDILTLSREAVESCPLMRFITAETHGHERGSETSTEYERLLSMLNKVKSLKLLNTRRRQLLNLDVLCLSSLIKQSKFKGLKNDKHWVGCCYSSVNDRLVSFHSTKEEFIRLLRNRKKSKVFRKVSFEELFRASISEFIAKIQKCLLVVGLSFEHYGLSEHLEQECHIPFTEFENFMKIGAHPIMYYTKFEDYNFQPSTEQLKNIQSLRRLSSVCLALTNSMKTSSVARLRQNQIGSVRYQVVECKEVFCQVIKLDSEEYHLLYQKTGESSRCYSIQGPDGHLISFYADPKRFFLPIFSDEVLYNMIDIMISWIRSCPDLKDCLTDIEVALRTLLLLMLTNPTKRNQKQVQSVRYLVMAIVSDFSSTSLMDKLREDLITPAEKVVYKLLRFLIKTIFGTGEKVLLSAKFKFMLNVSYLCHLITKETPDRLTDQIKCFEKFFEPKSQFGFFVNPKEAITPEEECVFYEQMKRFTSKEIDCQHTTPGVNLEAFSLMVSSFNNGTLIFKGEKKLNSLDPMTNSGCATALDLASNKSVVVNKHLNGERLLEYDFNKLLVSAVSQITESFVRKQKYKLSHSDYEYKVSKLVSRLVIGSKGEETGRSEDNLAEICFDGEEETSFFKSLEEKVNTTIARYRRGRRANDKGDGEKLTNTKGLHHLQLILTGKMAHLRKVILSEISFHLVEDFDPSCLTNDDMKFICEAVEGSTELSPLYFTSVIKDQCGLDEMAKNLCRKFFSENDWFSCMKMILLQMNANAYSGKYRHMQRQGLNFKFDWDKLEEDVRISERESNSESLSKALSLTKCMSAALKNLCFYSEESPTSYTSVGPDSGRLKFALSYKEQVGGNRELYIGDLRTKMFTRLIEDYFESFSSFFSGSCLNNDKEFENAILSMTINVREGFLNYSMDHSKWGPMMCPFLFLMFLQNLKLGDDQYVRSGKDHVSTLLTWHMHKLVEVPFPVVNAMMKSYVKSKLKLLRGSETTVTERIFRQYFEMGIVPSHISSLIDMGQGILHNASDFYGLLSERFINYCIGVIFGERPEAYTSSDDQITLFDRRLSDLVVSDPEEVLVLLEFQSHLSGLLNKFISPKSVAGRFAAEFKSRFYVWGEEVPLLTKFVSAALHNVKCKEPHQLCETIDTIADQAIANGVPVSLVNSIQRRTLDLLKYANFPLDPFLLNTNTDVKDWLDGSRGYRIQRLIEELCPNETKVVRKLVRKLHHKLKNGEFNEEFFLDLFNRDKTEAILQLGDLLGLEEDLNQLADVNWLNLNEMFPLRMVLRQKVVYPSVMTFQEERIPSLIKTLQNKLCSKFTRGAQKLLSEAINKSAFQSCISSGFIGLCKTLGSRCVRNKNRENLYIKKLLEDLTTDDHVTRVCNRDGITLYICDKQSHPEAHRDHICLLRPLLWDYICISLSNSFELGVWVLAEPTKGKNNSENLTLKHLNPCDYVARKPESSRLLEDKVNLNQVIQSVRRLYPKIFEDQLLPFMSDMSSKNMRWSPRIKFLDLCVLIDINSESLSLISHVVKWKRDEHYTVLFSDLANSHQRSDSSLVDEFVVSTRDVCKNFLKQVYFESFVREFVATTRTLGNFSWFPHKEMMPSEDGAEALGPFQSFVSKVVNKNVERPMFRNDLQFGFGWFSYRMGDVVCNAAMLIRQGLTNPKAFKSLKDLWDYMLNYTKGVLEFSISVDFTHNQNNTDCLRKFSLIFLVRCQLQNPGVAELLSCSHLFKGEIDRRMLDECLHLLRTDSVFKVNDGVFDIRSEEFEDYMEDPLILGDSLELELLGSKRILDGIRSIDFERVGPEWEPVPLTVKMGALFEGRNLVQNIIVKLETKDMKVFLAGLEGYEKISDVLGNLFLHRFRTGEHLLGSEISVILQELCIDRSILLIPLSLLPDWFAFKDCRLCFSKSRSTLMYEIVGGRFRLKGRSCDDWLGGSVAEDID.

The tract at residues 26–287 (KLNFLGQREP…ADSDDILTLS (262 aa)) is endonuclease. The Mn(2+) site is built by Glu51, Asp89, and Glu102. Lys115 is a catalytic residue. Residues 1166-1360 (LSMTINVREG…HLSGLLNKFI (195 aa)) enclose the RdRp catalytic domain. Asp1322 provides a ligand contact to Mg(2+).

Belongs to the Bunyavirales RNA polymerase family. In terms of assembly, homomultimer; the oligomeric structure is essential for the polymerase activity. Interacts with nucleoprotein N. Interacts with protein Z; this interaction inhibits viral transcription and replication, Z partially blocks the product exit tunnel for the releasing nascent RNA product. It depends on Mn(2+) as a cofactor. Requires Mg(2+) as cofactor.

The protein localises to the virion. Its subcellular location is the host cytoplasm. The enzyme catalyses RNA(n) + a ribonucleoside 5'-triphosphate = RNA(n+1) + diphosphate. RNA-dependent RNA polymerase, which is responsible for the replication and transcription of the viral RNA genome using antigenomic RNA as an intermediate. During transcription, synthesizes subgenomic RNAs and assures their capping by a cap-snatching mechanism, which involves the endonuclease activity cleaving the host capped pre-mRNAs. These short capped RNAs are then used as primers for viral transcription. The 3'-end of subgenomic mRNAs molecules are heterogeneous and not polyadenylated. The replicase function is to direct synthesis of antigenomic and genomic RNA which are encapsidated and non capped. As a consequence of the use of the same enzyme for both transcription and replication, these mechanisms need to be well coordinated. These processes may be regulated by proteins N and Z in a dose-dependent manner. Z protein inhibits the viral polymerase L und thus the viral transcription and RNA synthesis. The chain is RNA-directed RNA polymerase L from Homo sapiens (Human).